The chain runs to 1154 residues: FERM domain-containing protein A (1154 aa).

5 disordered regions span residues 122–149, 432–468, 715–734, 771–794, and 961–980; these read NNNS…SSSS, NLSS…NHHN, NKNN…SSSS, SNSN…TSSS, and TNGS…NNGI. 2 FERM domains span residues 218-547 and 666-1103; these read PLHQ…PSIQ and REIV…QTKL. A compositionally biased stretch (gly residues) spans 437-447; it reads GGSGNGSGSGN. Over residues 448–463 the composition is skewed to low complexity; the sequence is GSSSSSSNSSSGNNNN.

Key regulator of adhesion dynamics, it acts as an anti-adhesive. Plays a critical role in the regulation of cell-cell adhesion, multi-cellular development and, in particular, the formation of the organising center known as the tip. Required for turnover of paxillin-adhesion sites during cell migration. Plays a major role in normal cell shape, cell-substrate adhesion and actin cytoskeleton organization. This is FERM domain-containing protein A (frmA) from Dictyostelium discoideum (Social amoeba).